Here is a 171-residue protein sequence, read N- to C-terminus: Putative ankyrin repeat protein PA3287 (171 aa).

ANK repeat units lie at residues 48 to 77 (KGDSLLMLASYHGHADTVRLLLAYKADPDL), 81 to 110 (AGQTPLAGAAFKGDLAMVELLLAGGADVEG), and 114 to 143 (DGKTALMMAAMFNQAEVAASLLAHGARRDA).

The sequence is that of Putative ankyrin repeat protein PA3287 from Pseudomonas aeruginosa (strain ATCC 15692 / DSM 22644 / CIP 104116 / JCM 14847 / LMG 12228 / 1C / PRS 101 / PAO1).